A 260-amino-acid chain; its full sequence is Global transcriptional regulator CodY (260 aa).

The tract at residues M1 to L159 is GAF domain. Positions A207–R226 form a DNA-binding region, H-T-H motif.

The protein belongs to the CodY family.

The protein resides in the cytoplasm. Functionally, DNA-binding global transcriptional regulator which is involved in the adaptive response to starvation and acts by directly or indirectly controlling the expression of numerous genes in response to nutrient availability. During rapid exponential growth, CodY is highly active and represses genes whose products allow adaptation to nutrient depletion. The protein is Global transcriptional regulator CodY of Streptococcus equi subsp. zooepidemicus (strain H70).